We begin with the raw amino-acid sequence, 361 residues long: MTVPCIPRGLVMADIAAFRLTEEEKQRLLDPAVGGVILFRRNFQNIAQLKELTAEIKALRTPELIIAVDHEGGRVQRFIEGFTRLPAMSTLGEIWDKDGASAAETAAGQVGRVLATELSACGIDLSFTPVLDLDWGNCPVIGNRSFHRNPEAVARLALALQKGLEKGGMKSCGKHFPGHGFVEGDSHLVLPEDGRSLSELEAADLAPFRIMSREGMAAVMPAHVVYPQVDTKPAGFSEIWLKQILRRDIGFKGVIFSDDLTMEGACGAGGIKERARISFEAGCDIVLVCNRPDLVDELREDFRIPDNPALAQRWQYMANTLGSAAAQAVMQTTDFQAAQAFVAGLASPQDTAGGVKVGEAF.

Substrate is bound by residues Asp69, Arg77, Arg144, and 174–175; that span reads KH. His187 functions as the Proton donor/acceptor in the catalytic mechanism. The active-site Nucleophile is the Asp258.

This sequence belongs to the glycosyl hydrolase 3 family. NagZ subfamily.

It is found in the cytoplasm. The catalysed reaction is Hydrolysis of terminal non-reducing N-acetyl-D-hexosamine residues in N-acetyl-beta-D-hexosaminides.. It functions in the pathway cell wall biogenesis; peptidoglycan recycling. Functionally, plays a role in peptidoglycan recycling by cleaving the terminal beta-1,4-linked N-acetylglucosamine (GlcNAc) from peptide-linked peptidoglycan fragments, giving rise to free GlcNAc, anhydro-N-acetylmuramic acid and anhydro-N-acetylmuramic acid-linked peptides. The protein is Beta-hexosaminidase of Neisseria meningitidis serogroup C (strain 053442).